Consider the following 428-residue polypeptide: MSEENVQEFVLKEDCELRFAAGDDSDVCLELVKGYAEIFGTELLLNKKYTFPAKSRVAAFTWKGATIELVGTTESAYVAESTPMVIYLNIHAAMEEVRKKREEQAAGNSNKAKGPRLLLVGPTDVGKTTVSRILCNYSVRQGRTPIFVELDVGQNSVSVPGTVAAVLVQKTADVIDGFERNQPIVFNFGHTSPSANLSLYEALFKEMATTLNAQIQENDEAKIGGMIINTCGWVDGEGYKCIVKAASAFEVDVVIVLDHERLYSDLSKELPEFVRLTHVPKSGGVEQRTGQIRSKMRGENVHRYFYGTRANNLYPFTFDVSFDDVTLCKIGAEQLPDSCLPFGMEVENHETKLVIMEPSADIKHHLFAFSRSTKADENVLKSPVFGFCLVTEVDLEKRTMSILCPQRTIPSKVLVFSDITHLDDQIKR.

ATP-binding positions include E16, R56, and 124–129; that span reads DVGKTT.

The protein belongs to the Clp1 family. Clp1 subfamily.

It is found in the nucleus. Functionally, required for endonucleolytic cleavage during polyadenylation-dependent pre-mRNA 3'-end formation. The chain is Protein clpf-1 from Caenorhabditis elegans.